The chain runs to 526 residues: Peptide chain release factor 3 (526 aa).

One can recognise a tr-type G domain in the interval 8 to 277; the sequence is DKRRTFAIIS…GLTQWAPKPQ (270 aa). GTP contacts are provided by residues 17–24, 85–89, and 139–142; these read SHPDAGKT, DTPGH, and NKLD.

This sequence belongs to the TRAFAC class translation factor GTPase superfamily. Classic translation factor GTPase family. PrfC subfamily.

The protein localises to the cytoplasm. Its function is as follows. Increases the formation of ribosomal termination complexes and stimulates activities of RF-1 and RF-2. It binds guanine nucleotides and has strong preference for UGA stop codons. It may interact directly with the ribosome. The stimulation of RF-1 and RF-2 is significantly reduced by GTP and GDP, but not by GMP. This is Peptide chain release factor 3 from Actinobacillus succinogenes (strain ATCC 55618 / DSM 22257 / CCUG 43843 / 130Z).